Consider the following 255-residue polypeptide: Tabinhibitin 7 (255 aa).

A signal peptide spans M1–A23. The short motif at R32 to D34 is the Cell attachment site element. The SCP domain occupies L67–F211.

It belongs to the CRISP family. As to expression, expressed in salivary glands.

The protein resides in the secreted. In terms of biological role, inhibits platelet aggregation induced by all agonists tested (ADP, arachidonic acid, the thromboxane A2 analog U46619, thrombin, and snake venom snaclecs (TMVA that activates platelet through GPIB, and stejnulxin that specifically acts through GPVI (GP6))). May act by competing with fibrinogen for binding to glycoprotein IIb/IIIa (ITGA2B/ITGB3). This Tabanus yao (Horsefly) protein is Tabinhibitin 7.